Consider the following 223-residue polypeptide: Killer cell lectin-like receptor subfamily B member 1B allele A (223 aa).

Over 1-43 (MDSTTLVYADLNLARIQEPKHDSPPSLSPDTCRCPRWHRLALK) the chain is Cytoplasmic. The ITIM motif signature appears at 6–11 (LVYADL). The LCK-binding motif signature appears at 32-35 (CRCP). Residues 44-63 (FGCAGLILLVLVVIGLCVLV) form a helical; Signal-anchor for type II membrane protein membrane-spanning segment. The Extracellular portion of the chain corresponds to 64-223 (LSVQKSSVQK…LNHETPSNDS (160 aa)). A C-type lectin domain is found at 93 to 212 (ECPQDWLSHR…STDNRWICQK (120 aa)). Disulfide bonds link C122–C210 and C189–C202.

As to quaternary structure, homodimer; disulfide-linked. Interacts with tyrosine kinase LCK. Binds PTPN6/SHP-1 in a phosphorylation-dependent manner. In terms of tissue distribution, expressed in NK cells and a subset of T-cells.

The protein resides in the membrane. Its function is as follows. Receptor for CLEC2D/OCIL. Ligand-binding contributes to inhibition of cytotoxic natural killer (NK) cells. May mediate MHC class I-independent 'missing-self' recognition of allografts, tumor cells and virus-infected cells. This Mus musculus (Mouse) protein is Killer cell lectin-like receptor subfamily B member 1B allele A (Klrb1b).